The following is a 119-amino-acid chain: MARVSRGVQAHAKHKKILKKAKGYYGARSKVYRVAKQAVIKAGQYAYRDRRQRRRKFRRLWIVRINAEARNNGLSYSRMIDGISKADIEIDRKVLSDIAIFDKTAFAKIADQAKQALVV.

This sequence belongs to the bacterial ribosomal protein bL20 family.

In terms of biological role, binds directly to 23S ribosomal RNA and is necessary for the in vitro assembly process of the 50S ribosomal subunit. It is not involved in the protein synthesizing functions of that subunit. This Ruthia magnifica subsp. Calyptogena magnifica protein is Large ribosomal subunit protein bL20.